We begin with the raw amino-acid sequence, 353 residues long: Bone morphogenetic protein 2 (353 aa).

Positions 1–239 (GSLKRPEDLL…GHPLHKREKR (239 aa)) are excised as a propeptide. N-linked (GlcNAc...) asparagine glycosylation is found at Asn-91, Asn-121, and Asn-157. Residues 228–248 (GKGHPLHKREKRQAKHKQRKR) are disordered. Residues 231-248 (HPLHKREKRQAKHKQRKR) are compositionally biased toward basic residues. Disulfide bonds link Cys-253–Cys-318, Cys-282–Cys-350, and Cys-286–Cys-352. An N-linked (GlcNAc...) asparagine glycan is attached at Asn-295.

The protein belongs to the TGF-beta family. In terms of assembly, homodimer; disulfide-linked.

The protein localises to the secreted. Negatively regulates the structure and function of the limb apical ectodermal ridge. This is Bone morphogenetic protein 2 (BMP2) from Gallus gallus (Chicken).